The chain runs to 587 residues: Pescadillo homolog (587 aa).

A coiled-coil region spans residues 267–306 (LKKKEEKNDEEGKNLSKKELNKAIKADQEQQENDEQDNNN). A disordered region spans residues 290-311 (IKADQEQQENDEQDNNNGESVE). Residues 295 to 311 (EQQENDEQDNNNGESVE) show a composition bias toward acidic residues. The 100-residue stretch at 335–434 (STAELFSKFI…ELINVNEYAA (100 aa)) folds into the BRCT domain. The tract at residues 437–587 (TLPPHLSPWG…KKKEQLKKLN (151 aa)) is disordered. Residues 459–494 (KEDGEAEEDTDEEEEEVEIEDGDEDQEDEEEEEDED) show a composition bias toward acidic residues. Positions 470 to 587 (EEEEEVEIED…KKKEQLKKLN (118 aa)) form a coiled coil. Composition is skewed to basic and acidic residues over residues 529–541 (SNKEADEEKELKK), 559–569 (IEKKENREKQL), and 578–587 (KKKEQLKKLN).

It belongs to the pescadillo family. In terms of assembly, component of the NOP7 complex, composed of ERB1, NOP7 and YTM1. The complex is held together by ERB1, which interacts with NOP7 via its N-terminal domain and with YTM1 via a high-affinity interaction between the seven-bladed beta-propeller domains of the 2 proteins. The NOP7 complex associates with the 66S pre-ribosome.

The protein resides in the nucleus. It is found in the nucleolus. Its subcellular location is the nucleoplasm. Component of the NOP7 complex, which is required for maturation of the 25S and 5.8S ribosomal RNAs and formation of the 60S ribosome. Required for the transition from hyphal to yeast growth. The polypeptide is Pescadillo homolog (Candida albicans (strain SC5314 / ATCC MYA-2876) (Yeast)).